The chain runs to 290 residues: Bifunctional protein FolD 1 (290 aa).

Residues 164 to 166 (GRS), isoleucine 193, and isoleucine 236 contribute to the NADP(+) site.

Belongs to the tetrahydrofolate dehydrogenase/cyclohydrolase family. Homodimer.

It carries out the reaction (6R)-5,10-methylene-5,6,7,8-tetrahydrofolate + NADP(+) = (6R)-5,10-methenyltetrahydrofolate + NADPH. The enzyme catalyses (6R)-5,10-methenyltetrahydrofolate + H2O = (6R)-10-formyltetrahydrofolate + H(+). The protein operates within one-carbon metabolism; tetrahydrofolate interconversion. Its function is as follows. Catalyzes the oxidation of 5,10-methylenetetrahydrofolate to 5,10-methenyltetrahydrofolate and then the hydrolysis of 5,10-methenyltetrahydrofolate to 10-formyltetrahydrofolate. This chain is Bifunctional protein FolD 1, found in Geobacter metallireducens (strain ATCC 53774 / DSM 7210 / GS-15).